The chain runs to 462 residues: Metacaspase-1 (462 aa).

Pro residues predominate over residues 1–21 (MSYYPPPSGYPGGPPAYPPPQ). The interval 1–150 (MSYYPPPSGY…PPPPSGSVAF (150 aa)) is disordered. A compositionally biased stretch (low complexity) spans 22 to 33 (QQQQQQQQYPSY). Composition is skewed to pro residues over residues 49–69 (PSYPPPGQYGHPPQPGYPPHS) and 77–102 (SPQPPYGHPPPQHPPHQPPHRPPPSP). Residues H253 and C309 contribute to the active site.

It belongs to the peptidase C14B family.

In terms of biological role, involved in cell death (apoptosis). The protein is Metacaspase-1 (MCA1) of Coccidioides immitis (strain RS) (Valley fever fungus).